Reading from the N-terminus, the 779-residue chain is Glutathione biosynthesis bifunctional protein GshAB (779 aa).

Positions M1–A346 are glutamate--cysteine ligase. The ATP-grasp domain maps to K512–G768. ATP is bound at residue P539–R597. Positions 719, 738, and 740 each coordinate Mg(2+). Positions 719, 738, and 740 each coordinate Mn(2+).

It in the N-terminal section; belongs to the glutamate--cysteine ligase type 1 family. Type 2 subfamily. In terms of assembly, monomer. Requires Mg(2+) as cofactor. The cofactor is Mn(2+).

It catalyses the reaction L-cysteine + L-glutamate + ATP = gamma-L-glutamyl-L-cysteine + ADP + phosphate + H(+). The catalysed reaction is gamma-L-glutamyl-L-cysteine + glycine + ATP = glutathione + ADP + phosphate + H(+). The protein operates within sulfur metabolism; glutathione biosynthesis; glutathione from L-cysteine and L-glutamate: step 1/2. It participates in sulfur metabolism; glutathione biosynthesis; glutathione from L-cysteine and L-glutamate: step 2/2. In terms of biological role, synthesizes glutathione from L-glutamate and L-cysteine via gamma-L-glutamyl-L-cysteine. This Desulfotalea psychrophila (strain LSv54 / DSM 12343) protein is Glutathione biosynthesis bifunctional protein GshAB.